Here is a 115-residue protein sequence, read N- to C-terminus: V-type proton ATPase subunit G (115 aa).

This sequence belongs to the V-ATPase G subunit family. V-ATPase is a heteromultimeric enzyme composed of a peripheral catalytic V1 complex (components A to H) attached to an integral membrane V0 proton pore complex (components: a, c, c', c'', d, e, f and VOA1).

It is found in the vacuole membrane. Functionally, subunit of the V1 complex of vacuolar(H+)-ATPase (V-ATPase), a multisubunit enzyme composed of a peripheral complex (V1) that hydrolyzes ATP and a membrane integral complex (V0) that translocates protons. V-ATPase is responsible for acidifying and maintaining the pH of intracellular compartments. The chain is V-type proton ATPase subunit G (vma-10) from Neurospora crassa (strain ATCC 24698 / 74-OR23-1A / CBS 708.71 / DSM 1257 / FGSC 987).